The sequence spans 132 residues: uncharacterized protein (132 aa).

Lys59 is covalently cross-linked (Glycyl lysine isopeptide (Lys-Gly) (interchain with G-Cter in SAMP2)).

Belongs to the OsmC/Ohr family.

This is an uncharacterized protein from Haloferax volcanii (strain ATCC 29605 / DSM 3757 / JCM 8879 / NBRC 14742 / NCIMB 2012 / VKM B-1768 / DS2) (Halobacterium volcanii).